The primary structure comprises 252 residues: Putative teichuronic acid biosynthesis glycosyltransferase TuaG (252 aa).

The protein belongs to the glycosyltransferase 2 family.

The protein operates within cell wall biogenesis; teichuronic acid biosynthesis. The chain is Putative teichuronic acid biosynthesis glycosyltransferase TuaG (tuaG) from Bacillus subtilis (strain 168).